The sequence spans 302 residues: Glycine--tRNA ligase alpha subunit (302 aa).

This sequence belongs to the class-II aminoacyl-tRNA synthetase family. Tetramer of two alpha and two beta subunits.

It is found in the cytoplasm. The catalysed reaction is tRNA(Gly) + glycine + ATP = glycyl-tRNA(Gly) + AMP + diphosphate. The sequence is that of Glycine--tRNA ligase alpha subunit from Xanthomonas euvesicatoria pv. vesicatoria (strain 85-10) (Xanthomonas campestris pv. vesicatoria).